A 108-amino-acid polypeptide reads, in one-letter code: X antigen family member 5 (108 aa).

Residues 20 to 108 are disordered; sequence VGPMLEPSVP…PEGGEGKPQL (89 aa). 2 stretches are compositionally biased toward basic and acidic residues: residues 40-52 and 94-108; these read SQDHTPGQKREDD and EQFKMPEGGEGKPQL.

It belongs to the GAGE family.

This chain is X antigen family member 5 (XAGE5), found in Homo sapiens (Human).